A 433-amino-acid polypeptide reads, in one-letter code: Glutamate-1-semialdehyde 2,1-aminomutase (433 aa).

At K271 the chain carries N6-(pyridoxal phosphate)lysine.

Belongs to the class-III pyridoxal-phosphate-dependent aminotransferase family. HemL subfamily. Homodimer. Pyridoxal 5'-phosphate is required as a cofactor.

It is found in the cytoplasm. It catalyses the reaction (S)-4-amino-5-oxopentanoate = 5-aminolevulinate. It participates in porphyrin-containing compound metabolism; protoporphyrin-IX biosynthesis; 5-aminolevulinate from L-glutamyl-tRNA(Glu): step 2/2. Its pathway is porphyrin-containing compound metabolism; chlorophyll biosynthesis. This chain is Glutamate-1-semialdehyde 2,1-aminomutase, found in Prochlorococcus marinus (strain MIT 9515).